The primary structure comprises 309 residues: Olfactory receptor 8B4 (309 aa).

Residues 1–25 (MTLRNSSSVTEFILVGLSEQPELQL) are Extracellular-facing. N-linked (GlcNAc...) asparagine glycosylation is present at Asn-5. A helical membrane pass occupies residues 26–46 (PLFLLFLGIYVFTVVGNLGLI). The Cytoplasmic portion of the chain corresponds to 47 to 54 (TLIGINPS). Residues 55–75 (LHTPMYFFLFNLSFIDLCYSC) traverse the membrane as a helical segment. At 76–98 (VFTPKMLNDFVSESIISYVGCMT) the chain is on the extracellular side. Cys-96 and Cys-188 form a disulfide bridge. The chain crosses the membrane as a helical span at residues 99–119 (QLFFFCFFVNSECYVLVSMAY). Residues 120–138 (DRYVAICNPLLYMVTMSPR) are Cytoplasmic-facing. Residues 139 to 159 (VCFLLMFGSYVVGFAGAMAHT) traverse the membrane as a helical segment. At 160-196 (GSMLRLTFCDSNVIDHYLCDVLPLLQLSCTSTHVSEL) the chain is on the extracellular side. The chain crosses the membrane as a helical span at residues 197–216 (VFFIVVGVITMLSSISIVIS). The Cytoplasmic portion of the chain corresponds to 217 to 236 (YALILSNILCIPSAEGRSKA). The helical transmembrane segment at 237–257 (FSTWGSHIIAVALFFGSGTFT) threads the bilayer. Residues 258–270 (YLTTSFPGSMNHG) lie on the Extracellular side of the membrane. Residues 271–291 (RFASVFYTNVVPMLNPSIYSL) traverse the membrane as a helical segment. Topologically, residues 292–309 (RNKDDKLALGKTLKRVLF) are cytoplasmic.

The protein belongs to the G-protein coupled receptor 1 family.

The protein localises to the cell membrane. Its function is as follows. Odorant receptor. The sequence is that of Olfactory receptor 8B4 (OR8B4) from Homo sapiens (Human).